Consider the following 413-residue polypeptide: Methylaspartate ammonia-lyase (413 aa).

Gln172 is a binding site for (2S,3S)-3-methyl-L-aspartate. The Mg(2+) site is built by Asp238, Glu273, and Asp307. Residue Gln329 coordinates (2S,3S)-3-methyl-L-aspartate. Lys331 serves as the catalytic Proton acceptor. 360–361 (TC) contacts (2S,3S)-3-methyl-L-aspartate.

This sequence belongs to the methylaspartate ammonia-lyase family. As to quaternary structure, homodimer. Mg(2+) is required as a cofactor.

The enzyme catalyses (2S,3S)-3-methyl-L-aspartate = mesaconate + NH4(+). Its pathway is amino-acid degradation; L-glutamate degradation via mesaconate pathway; acetate and pyruvate from L-glutamate: step 2/4. Involved in the methylaspartate cycle. Catalyzes the formation of the alpha,beta-unsaturated bond by the reversible anti elimination of ammonia from L-threo-beta-methylaspartate (L-threo-(2S,3S)-3-methylaspartate) to give mesaconate. The chain is Methylaspartate ammonia-lyase from Citrobacter amalonaticus.